We begin with the raw amino-acid sequence, 138 residues long: Isochorismatase-like protein asqB (138 aa).

Belongs to the isochorismatase family.

It catalyses the reaction [(1'E)-5'-(3',3'-dimethyloxiran-2'-yl)-3'-hydroxy-3'-methylpent-1'-en-1'-yl]-quinolinone B = yaequinolone C. Its pathway is secondary metabolite biosynthesis. It participates in alkaloid biosynthesis. It functions in the pathway mycotoxin biosynthesis. Its function is as follows. Isochorismatase-like protein; part of the gene cluster that mediates the biosynthesis of the aspoquinolone mycotoxins. Within the pathway, asqB converts [(1'E)-5'-(3',3'-dimethyloxiran-2'-yl)-3'-hydroxy-3'-methylpent-1'-en-1'-yl]-quinolinone B into yaequinolone C. The first step of the pathway is catalyzed by the nonribosomal peptide synthetase asqK that condenses anthranilic acid and O-methyl-L-tyrosine to produce 4'-methoxycyclopeptin. 4'-methoxycyclopeptin is then converted to 4'-methoxydehydrocyclopeptin by the ketoglutarate-dependent dioxygenase asqJ. AsqJ also converts its first product 4'-methoxydehydrocyclopeptin to 4'-methoxycyclopenin. The following conversion of 4'-methoxycyclopenin into 4'-methoxyviridicatin is catalyzed by the cyclopenase asqI. 4'-methoxyviridicatin is the precursor of quinolone natural products, and is further converted to quinolinone B. The prenyltransferase asqH1 then catalyzes the canonical Friedel-Crafts alkylation of quinolinone B with dimethylallyl cation to yield dimethylallyl quinolone, which is subjected to FAD-dependent dehydrogenation by the FAD-linked oxidoreductase asqF to yield conjugated aryl diene. The delta(3') double bond then serves as the site of the second alkylation with DMAPP catalyzed by the prenyltransferase asqH2 to yield a carbenium ion intermediate, which can be attacked by H(2)O to yield a styrenyl quinolone containing a C3'-hydroxyprenyl chain. The FAD-dependent monooxygenase asqG performs epoxidation of the terminal C7'-C8' olefin. Finally, after dehydratation of the epoxide at C3 by asqC, the quinolone epoxide rearrangement protein asqO catalyzes an enzymatic 3-exo-tet cyclization to yield the cyclopropyl-THF ring system in aspoquinolone. This is Isochorismatase-like protein asqB from Emericella nidulans (strain FGSC A4 / ATCC 38163 / CBS 112.46 / NRRL 194 / M139) (Aspergillus nidulans).